We begin with the raw amino-acid sequence, 188 residues long: Elongation factor P (188 aa).

Lysine 34 bears the N6-(3,6-diaminohexanoyl)-5-hydroxylysine mark.

The protein belongs to the elongation factor P family. In terms of processing, may be beta-lysylated on the epsilon-amino group of Lys-34 by the combined action of EpmA and EpmB, and then hydroxylated on the C5 position of the same residue by EpmC (if this protein is present). Lysylation is critical for the stimulatory effect of EF-P on peptide-bond formation. The lysylation moiety may extend toward the peptidyltransferase center and stabilize the terminal 3-CCA end of the tRNA. Hydroxylation of the C5 position on Lys-34 may allow additional potential stabilizing hydrogen-bond interactions with the P-tRNA.

The protein resides in the cytoplasm. It participates in protein biosynthesis; polypeptide chain elongation. Functionally, involved in peptide bond synthesis. Alleviates ribosome stalling that occurs when 3 or more consecutive Pro residues or the sequence PPG is present in a protein, possibly by augmenting the peptidyl transferase activity of the ribosome. Modification of Lys-34 is required for alleviation. In Pectobacterium carotovorum subsp. carotovorum (strain PC1), this protein is Elongation factor P.